A 196-amino-acid polypeptide reads, in one-letter code: Nucleoside triphosphate pyrophosphatase (196 aa).

Aspartate 72 acts as the Proton acceptor in catalysis.

The protein belongs to the Maf family. A divalent metal cation serves as cofactor.

The protein resides in the cytoplasm. The catalysed reaction is a ribonucleoside 5'-triphosphate + H2O = a ribonucleoside 5'-phosphate + diphosphate + H(+). The enzyme catalyses a 2'-deoxyribonucleoside 5'-triphosphate + H2O = a 2'-deoxyribonucleoside 5'-phosphate + diphosphate + H(+). Functionally, nucleoside triphosphate pyrophosphatase. May have a dual role in cell division arrest and in preventing the incorporation of modified nucleotides into cellular nucleic acids. The chain is Nucleoside triphosphate pyrophosphatase from Chlamydia muridarum (strain MoPn / Nigg).